Here is a 520-residue protein sequence, read N- to C-terminus: Glutamate--cysteine ligase (520 aa).

This sequence belongs to the glutamate--cysteine ligase type 1 family. Type 1 subfamily.

The enzyme catalyses L-cysteine + L-glutamate + ATP = gamma-L-glutamyl-L-cysteine + ADP + phosphate + H(+). It functions in the pathway sulfur metabolism; glutathione biosynthesis; glutathione from L-cysteine and L-glutamate: step 1/2. The sequence is that of Glutamate--cysteine ligase from Serratia proteamaculans (strain 568).